A 180-amino-acid chain; its full sequence is Stathmin-3 (180 aa).

Residues C22 and C24 are each lipidated (S-palmitoyl cysteine). The SLD domain occupies 38–180 (GDMEVKQLDK…NKEQREEMSG (143 aa)). S50, S60, S65, S68, S72, S73, and S81 each carry phosphoserine. Residues 59-82 (KSPSDLSPESPMLSSPPKKKDTSL) are disordered. The span at 60–74 (SPSDLSPESPMLSSP) shows a compositional bias: low complexity. Residues 76-179 (KKKDTSLEEL…RNKEQREEMS (104 aa)) are a coiled coil.

This sequence belongs to the stathmin family. Interacts with STAT3. Interacts with CLU (secreted form); this interaction may act as an important modulator during neuronal differentiation. In terms of processing, N-terminal palmitoylation promotes specific anchoring to the cytosolic leaflet of Golgi membranes and subsequent vesicular trafficking along dendrites and axons. Neuronal Stathmins are substrates for palmitoyltransferases ZDHHC3, ZDHHC7 and ZDHHC15.

The protein localises to the golgi apparatus. The protein resides in the cell projection. It localises to the growth cone. Its subcellular location is the axon. It is found in the cytoplasm. The protein localises to the cytosol. In terms of biological role, exhibits microtubule-destabilizing activity, which is antagonized by STAT3. In Macaca fascicularis (Crab-eating macaque), this protein is Stathmin-3 (STMN3).